A 41-amino-acid chain; its full sequence is Photosystem I reaction center subunit IX (41 aa).

The chain crosses the membrane as a helical span at residues 7–27; sequence YLSTAPVVAFAWLTFTAGFII.

Belongs to the PsaJ family.

The protein resides in the plastid. It is found in the chloroplast thylakoid membrane. In terms of biological role, may help in the organization of the PsaE and PsaF subunits. In Stigeoclonium helveticum (Green alga), this protein is Photosystem I reaction center subunit IX.